Reading from the N-terminus, the 134-residue chain is Large ribosomal subunit protein bL12 (134 aa).

The protein belongs to the bacterial ribosomal protein bL12 family. As to quaternary structure, homodimer. Part of the ribosomal stalk of the 50S ribosomal subunit. Forms a multimeric L10(L12)X complex, where L10 forms an elongated spine to which 2 to 4 L12 dimers bind in a sequential fashion. Binds GTP-bound translation factors.

Its function is as follows. Forms part of the ribosomal stalk which helps the ribosome interact with GTP-bound translation factors. Is thus essential for accurate translation. The polypeptide is Large ribosomal subunit protein bL12 (Anaplasma phagocytophilum (strain HZ)).